A 129-amino-acid polypeptide reads, in one-letter code: Large-conductance mechanosensitive channel (129 aa).

The next 3 helical transmembrane spans lie at 8-28, 30-50, and 67-87; these read FIMR…AAFT, IVKS…AGAV, and GAVL…FLII.

This sequence belongs to the MscL family. In terms of assembly, homopentamer.

The protein resides in the cell membrane. In terms of biological role, channel that opens in response to stretch forces in the membrane lipid bilayer. May participate in the regulation of osmotic pressure changes within the cell. In Oenococcus oeni (strain ATCC BAA-331 / PSU-1), this protein is Large-conductance mechanosensitive channel.